The following is a 400-amino-acid chain: tRNA-specific 2-thiouridylase MnmA (400 aa).

ATP-binding positions include 19 to 26 (AMSGGVDS) and L45. Catalysis depends on C113, which acts as the Nucleophile. C113 and C210 are disulfide-bonded. G137 lines the ATP pocket. Residues 160-162 (RDQ) are interaction with tRNA. C210 serves as the catalytic Cysteine persulfide intermediate.

Belongs to the MnmA/TRMU family.

The protein localises to the cytoplasm. The enzyme catalyses S-sulfanyl-L-cysteinyl-[protein] + uridine(34) in tRNA + AH2 + ATP = 2-thiouridine(34) in tRNA + L-cysteinyl-[protein] + A + AMP + diphosphate + H(+). Functionally, catalyzes the 2-thiolation of uridine at the wobble position (U34) of tRNA, leading to the formation of s(2)U34. This is tRNA-specific 2-thiouridylase MnmA from Nitrobacter winogradskyi (strain ATCC 25391 / DSM 10237 / CIP 104748 / NCIMB 11846 / Nb-255).